The primary structure comprises 290 residues: 33 kDa chaperonin (290 aa).

2 disulfide bridges follow: Cys-235/Cys-237 and Cys-268/Cys-271.

It belongs to the HSP33 family. Under oxidizing conditions two disulfide bonds are formed involving the reactive cysteines. Under reducing conditions zinc is bound to the reactive cysteines and the protein is inactive.

The protein localises to the cytoplasm. Its function is as follows. Redox regulated molecular chaperone. Protects both thermally unfolding and oxidatively damaged proteins from irreversible aggregation. Plays an important role in the bacterial defense system toward oxidative stress. This chain is 33 kDa chaperonin, found in Streptococcus pyogenes serotype M5 (strain Manfredo).